We begin with the raw amino-acid sequence, 194 residues long: Type II secretion system protein H (194 aa).

A propeptide spans 1 to 6 (MTATRG) (leader sequence). Residue F7 is modified to N-methylphenylalanine. The chain crosses the membrane as a helical span at residues 12–32 (ILLVLVLVSASAVAVIATFPV).

It belongs to the GSP H family. In terms of assembly, type II secretion is composed of four main components: the outer membrane complex, the inner membrane complex, the cytoplasmic secretion ATPase and the periplasm-spanning pseudopilus. Interacts with core component EpsG. In terms of processing, cleaved by prepilin peptidase. Post-translationally, methylated by prepilin peptidase at the amino group of the N-terminal phenylalanine once the leader sequence is cleaved by prepilin peptidase.

The protein localises to the cell inner membrane. Functionally, component of the type II secretion system required for the energy-dependent secretion of extracellular factors such as proteases and toxins from the periplasm. Part of the pseudopilus tip complex that is critical for the recognition and binding of secretion substrates. The sequence is that of Type II secretion system protein H (epsH) from Vibrio cholerae serotype O1 (strain ATCC 39315 / El Tor Inaba N16961).